The sequence spans 348 residues: Phosphoribosylformylglycinamidine cyclo-ligase (348 aa).

It belongs to the AIR synthase family.

The protein resides in the cytoplasm. It carries out the reaction 2-formamido-N(1)-(5-O-phospho-beta-D-ribosyl)acetamidine + ATP = 5-amino-1-(5-phospho-beta-D-ribosyl)imidazole + ADP + phosphate + H(+). It functions in the pathway purine metabolism; IMP biosynthesis via de novo pathway; 5-amino-1-(5-phospho-D-ribosyl)imidazole from N(2)-formyl-N(1)-(5-phospho-D-ribosyl)glycinamide: step 2/2. This is Phosphoribosylformylglycinamidine cyclo-ligase from Sorangium cellulosum (strain So ce56) (Polyangium cellulosum (strain So ce56)).